A 661-amino-acid chain; its full sequence is MLLFRATLLPSPPFFHKTYFSHLSPVIFSDDPLPVSLQRNRVSGCRKQKWRQIRTLALQSDTLSEVRSAPPELNVERNKFRILIAGGGIGGLVLALAAKKKGFDALVFEKDMSAIRGEGQYRGPIQIQSNALAALEAIDSQVAEEVMGTGCITGDRINGLVDGVSGTWYIKFDTFTPAAERGLPVTRVISRMSLQQILARAVGDDAILSDSKIVDFVDYGNKVAVILENGQQYEGDLLVGADGIWSKVREILFGYSEPSYSGYTCYTGIADFVPPDIDTVGYRVFLGHKQYFVSSDVGAGKMQWYAFHNEPPSGSDVPNGKKEILLKIFNGWCDNVIDLINATEEELILRRDIYDRIPIFTWGKGRVTLLGDSVHAMQPNMGQGGCMAIEDSYQLAHELEKARKESIQSRKPMDVKSALKRYEKERRLRVAVIYGMARMAAIMASTYRPYLGVGLGPLSFLTKYKIPHPGRTSGRLVIKYAMPLMLSWVLGGNSSKLEGRSLTCRLSDKASDQLRKWFEDDDALERALGGEWYLFPLNNGDIQPIRLVRDDKRFHIIGSISHDDSEGISIHLPFPQVHKTHARIACKDNIFYLTDLQSQYGTWITDNEGRRYQAPPNVPVRFRSSYSIEFGSDKKVVFKVKVLSTSHKSAVYGGQNLSPVV.

A chloroplast-targeting transit peptide spans 1–59; sequence MLLFRATLLPSPPFFHKTYFSHLSPVIFSDDPLPVSLQRNRVSGCRKQKWRQIRTLALQ. FAD contacts are provided by residues 81-109 and 359-372; these read RILI…LVFE and IFTW…LLGD. An FHA domain is found at 555 to 609; that stretch reads HIIGSISHDDSEGISIHLPFPQVHKTHARIACKDNIFYLTDLQSQYGTWITDNEG.

FAD is required as a cofactor. Expressed in flower buds, lips and leaves. Detected in roots.

The protein resides in the plastid. The protein localises to the chloroplast. The catalysed reaction is all-trans-zeaxanthin + 4 reduced [2Fe-2S]-[ferredoxin] + 2 O2 + 4 H(+) = all-trans-violaxanthin + 4 oxidized [2Fe-2S]-[ferredoxin] + 2 H2O. The protein operates within plant hormone biosynthesis; abscisate biosynthesis. Functionally, zeaxanthin epoxidase that plays an important role in the xanthophyll cycle and abscisic acid (ABA) biosynthesis. Converts zeaxanthin into antheraxanthin and subsequently violaxanthin. The chain is Zeaxanthin epoxidase, chloroplastic (ZEP) from Oncidium hybrid cultivar (Orchid).